The sequence spans 1266 residues: MIAHKQKKAKKKRVWASGQLSAAITTSEMGLKSVSSNSIFDPEYIKELVNDIRKFSHVLLYLKEAILSDCFKEVIHIRLDELLHMSKHQNLNSVDLQNAAETLASKVKAVNFTEVNDENKNDLFREVFSSIETLAFTFGNILTNFLMGDVGNDSILRLPISRESKSFENISMDSVDLPHEKGNFSPIELDNLLLKNSDSIELALSYAKTWSKYTKNIVSWVEKKLNLELESTRNIVKLAEATRSSIGIQEFMPLQSLFTNALLNDIHSSHLLQQTIAALQANKFVQPLLGRKNEMEKQRKEIKELWKQQQNKLLETETALKKAKLLCMQRQDEYEKAKSSMFRAEEEQLSSSVGLGKNLNKLLEKRRRLEEEALQKVEEANEHYKVCVTNVEERRNDLENTKREILTQLRTLVFQCDLTLKAVTVNLFHMQQLQAASLANSLQSLCDSAKLYDPGQEYSEFVKATSSSELEEKVDGNVNKQIASSPQTSGYEPADSLEDVARLPDSCHKLEEDRCSNSADMTGPSFIRSWKFGMFSDSESTGGSSESRSLDSESISPGDFHRKLPRTPSSGTMSSADDLDEREPPSPSEAGPNSLGTFKKTLMSKAALTHKFRKLRSPTKCRDCEGIVMFPGVECEECLLVCHRKCLENLVIVCGHQKLQGKMHIFGAEFIQVAKKEPDGIPFVLKICASEIESRALCLQGIYRVCGNKIKTEKLCQALENGMHLVDISEFSSHDICDVLKLYLRQLPEPFILFRLYKEFIDLAKEIQHVNEEQEAKKDSPEDKKHPHVSIEINRILLRSKDLLRQLPASNFNSLHYLIVHLKRVVDHAEENKMNSKNLGVIFGPTLIRPRPTTAPVTISSLAEYSSQARVVEFLITYAQKIFDGSLQPQAGVIANTGAIAPQVDHGCHPKPLLSPDERDSDHSLKQLFFSSKEDIRTMDCESKTFELTTSFEESERKQNALGKCDAPILDNKVHLLFDQELESASHKTEDTCKSPKLLLLRSDRVANSVQRPTPRTRLRPVSLPVDRLLLLAGSPTERSSRNTGNTDSDKFGKNAAFEGLHRKDNSNTTCSKVNGFDQQNVQKSWDKQNERNSFTAKTTVIIPSAYAEKGLAVSTGNNRGHSSGAAQPSKAHADPARSARDTSEHSSSDSCPVAAVRAPRTLQPQHWTTFYKPPNPTFNVRGTEEKTAFPSAAVPPVLVHAPQSHVAKSDPDLEATLACPVQTSGQPKESSEEPGLPEGTPTCQRPRLKRMQQFEDLEDEIPQFV.

A phosphoserine mark is found at serine 166, serine 171, serine 174, and serine 185. An F-BAR domain is found at isoleucine 187–glutamate 457. Positions arginine 291–valine 413 form a coiled coil. Phosphoserine occurs at positions 496, 516, and 549. The span at serine 538 to serine 556 shows a compositional bias: low complexity. Positions serine 538–glycine 596 are disordered. The segment at threonine 609–cysteine 654 adopts a Phorbol-ester/DAG-type zinc-finger fold. Residues alanine 668–phenylalanine 883 form the Rho-GAP domain. Serine 915, serine 951, and serine 1023 each carry phosphoserine. 3 disordered regions span residues alanine 1033 to lysine 1054, valine 1114 to proline 1153, and valine 1222 to arginine 1248. A compositionally biased stretch (polar residues) spans serine 1115–alanine 1127. Basic and acidic residues predominate over residues alanine 1132–serine 1148. Phosphoserine occurs at positions 1149 and 1151. The segment at proline 1263–valine 1266 is interaction with PTPN13/PTPL1.

In terms of assembly, interacts with PTPN13/PTPL1. Interacts with RAP2A via its coiled coil domain. Interacts with RASIP1.

GTPase activator for the Rho-type GTPases by converting them to an inactive GDP-bound state. Has strong activity toward RHOA, and weaker activity toward RAC1 and CDC42. May act as a specific effector of RAP2A to regulate Rho. In concert with RASIP1, suppresses RhoA signaling and dampens ROCK and MYH9 activities in endothelial cells and plays an essential role in blood vessel tubulogenesis. In Rattus norvegicus (Rat), this protein is Rho GTPase-activating protein 29 (Arhgap29).